The chain runs to 414 residues: Esterase FrsA (414 aa).

Belongs to the FrsA family.

It catalyses the reaction a carboxylic ester + H2O = an alcohol + a carboxylate + H(+). Its function is as follows. Catalyzes the hydrolysis of esters. The sequence is that of Esterase FrsA from Enterobacter sp. (strain 638).